The following is a 557-amino-acid chain: T-complex protein 1 subunit theta-like 2 (557 aa).

2 disordered regions span residues 1–33 and 531–557; these read MDSTVPSALELPQRLALNPRESPRSPEEEEPHL and EIWNPDSKKTKKHPPPVETKKILGLNN.

This sequence belongs to the TCP-1 chaperonin family.

It localises to the cytoplasm. Possible molecular chaperone; assists the folding of proteins upon ATP hydrolysis. This is T-complex protein 1 subunit theta-like 2 (CCT8L2) from Homo sapiens (Human).